The chain runs to 24 residues: Brevinin-1HSa (24 aa).

Cysteine 18 and cysteine 24 are joined by a disulfide.

As to expression, expressed by the skin glands.

The protein resides in the secreted. Its function is as follows. Has antibacterial activity against the Gram-positive bacterium S.aureus ATCC 25923 (MIC=3 uM) and the Gram-negative bacterium E.coli ATCC 25726 (MIC=24 uM). This is Brevinin-1HSa from Odorrana hosii (Hose's rock frog).